A 189-amino-acid polypeptide reads, in one-letter code: Bilin-binding protein (189 aa).

The N-terminal stretch at 1–15 (MQYLIVLALVAAASA) is a signal peptide. 2 disulfides stabilise this stretch: Cys-23-Cys-130 and Cys-57-Cys-185.

Belongs to the calycin superfamily. Lipocalin family. In terms of assembly, homotetramer. In terms of tissue distribution, hemolymph.

Its subcellular location is the secreted. This protein binds the blue pigments bilins. The protein is Bilin-binding protein of Pieris brassicae (White butterfly).